Here is a 234-residue protein sequence, read N- to C-terminus: Ribose-5-phosphate isomerase A (234 aa).

Residues Thr28 to Thr31, Asp83 to Asp86, and Lys96 to Gly99 contribute to the substrate site. The active-site Proton acceptor is Glu105. Position 123 (Lys123) interacts with substrate.

Belongs to the ribose 5-phosphate isomerase family. In terms of assembly, homodimer.

It carries out the reaction aldehydo-D-ribose 5-phosphate = D-ribulose 5-phosphate. The protein operates within carbohydrate degradation; pentose phosphate pathway; D-ribose 5-phosphate from D-ribulose 5-phosphate (non-oxidative stage): step 1/1. In terms of biological role, catalyzes the reversible conversion of ribose-5-phosphate to ribulose 5-phosphate. The sequence is that of Ribose-5-phosphate isomerase A from Bartonella quintana (strain Toulouse) (Rochalimaea quintana).